We begin with the raw amino-acid sequence, 348 residues long: MNIMIEIPEFIIPLIPWIRGVVGLVLVGAIFLGAMGAVWLERKLSADIQFRYGPSRVGKFGLLQLVADAIKLFTKEDMRPRNADRLLFDNAPIFMMSSVFLMLVAIPVGAVFINGVEYPLAVTEMDISVLYIEAMSAITIFGIFMIAYGSNNKYSLLGAFRNFARMVGYEVPLGITVVSVAIMTGSLNIVEIASAQGLLWNIFLQPIGFIVFFIALMADMGRLPFDQNESEEELVAGWITEYTGMRFGLGFFAEYIHMILGSFLVALLFLGGWNVPAFVANNPVLGLIAPTGFFLLKTVLVLMTIIGMRWAVPRFRIDQVVDLSWKRLLPLSLLNLVWAVGLGLYLGA.

The next 8 helical transmembrane spans lie at 20 to 40 (GVVG…AVWL), 93 to 113 (IFMM…AVFI), 127 to 147 (ISVL…FMIA), 172 to 192 (PLGI…IVEI), 198 to 218 (LLWN…ALMA), 259 to 279 (ILGS…PAFV), 286 to 306 (GLIA…MTII), and 328 to 348 (LLPL…YLGA).

This sequence belongs to the complex I subunit 1 family. The FPO complex is composed of at least 13 different subunits. FpoA, FpoH, FpoJ, FpoK, FpoL, FpoM and FpoN proteins constitute the membrane sector of the complex.

It is found in the cell membrane. The enzyme catalyses methanophenazine + reduced coenzyme F420-(gamma-L-Glu)(n) = dihydromethanophenazine + oxidized coenzyme F420-(gamma-L-Glu)(n) + H(+). Functionally, component of the F(420)H(2) dehydrogenase (FPO complex) which is part of the energy-conserving F(420)H(2):heterodisulfide oxidoreductase system. The membrane-bound electron transfer system of the complex plays an important role in the metabolism of methylotrophic methanogens when the organisms grow on methanol or methylamines. Catalyzes the oxidation of methanophenazine to dihydromethanophenazine. It shuttles electrons from F(420)H(2), via FAD and iron-sulfur (Fe-S) centers, to methanophenazine (an electron carrier in the membrane). It couples the redox reaction to proton translocation (for every two electrons transferred, two hydrogen ions are translocated across the cytoplasmic membrane), and thus conserves the redox energy in a proton gradient. This Methanosarcina acetivorans (strain ATCC 35395 / DSM 2834 / JCM 12185 / C2A) protein is F(420)H(2) dehydrogenase subunit H.